A 364-amino-acid chain; its full sequence is Histidinol-phosphate aminotransferase (364 aa).

Residue Lys-222 is modified to N6-(pyridoxal phosphate)lysine.

Belongs to the class-II pyridoxal-phosphate-dependent aminotransferase family. Histidinol-phosphate aminotransferase subfamily. As to quaternary structure, homodimer. Requires pyridoxal 5'-phosphate as cofactor.

It carries out the reaction L-histidinol phosphate + 2-oxoglutarate = 3-(imidazol-4-yl)-2-oxopropyl phosphate + L-glutamate. Its pathway is amino-acid biosynthesis; L-histidine biosynthesis; L-histidine from 5-phospho-alpha-D-ribose 1-diphosphate: step 7/9. This Brevibacillus brevis (strain 47 / JCM 6285 / NBRC 100599) protein is Histidinol-phosphate aminotransferase.